A 167-amino-acid chain; its full sequence is UPF0587 protein F46B6.12 (167 aa).

Residues Cys34, Cys37, Cys68, and Cys71 each contribute to the Zn(2+) site.

The protein belongs to the UPF0587 family.

This Caenorhabditis elegans protein is UPF0587 protein F46B6.12.